The chain runs to 186 residues: uncharacterized protein (186 aa).

This is an uncharacterized protein from Trypanosoma brucei brucei.